Reading from the N-terminus, the 244-residue chain is Putative lipoprotein LprA (244 aa).

A signal peptide spans 1–24 (MKHPPCSVVAAATAILAVVLAIGG). Cys25 carries the N-palmitoyl cysteine lipid modification. The S-diacylglycerol cysteine moiety is linked to residue Cys25.

It belongs to the LppX/LprAFG lipoprotein family.

The protein localises to the cell membrane. This Mycobacterium tuberculosis (strain CDC 1551 / Oshkosh) protein is Putative lipoprotein LprA (lprA).